The primary structure comprises 422 residues: PHAF1 protein T01G9.2 (422 aa).

This sequence belongs to the PHAF1 family.

The protein resides in the cytoplasm. Its subcellular location is the preautophagosomal structure. Its function is as follows. May play a regulatory role in autophagic activity. The protein is PHAF1 protein T01G9.2 of Caenorhabditis elegans.